Reading from the N-terminus, the 283-residue chain is MGQIIDGKTLAAEIDKQTMTEVQKLKNQGVEPHLVVVLVGENPASQIYVRNKEKRANKLGIKSTLVTMNADISENELLLKIQELNQTEDVNAILVQMPLPKHIDAFKVTMAIDPRKDVDGFHPVNVGKLFEGKTQHTPIACTPQGIMEMFQKYHIDIQGKRAVVVGRSSIVGKPMAALLLNANATVTLAHSYTKNLAALTKEADILVVATGIAHFIKEDQVKEGAVVIDVGMDRDENGKLTGDVDFENVEKHVSYITPVPKGVGPMTISMLMKQTVNLTKWSI.

NADP(+) contacts are provided by residues 166–168 and serine 191; that span reads GRS.

Belongs to the tetrahydrofolate dehydrogenase/cyclohydrolase family. In terms of assembly, homodimer.

It catalyses the reaction (6R)-5,10-methylene-5,6,7,8-tetrahydrofolate + NADP(+) = (6R)-5,10-methenyltetrahydrofolate + NADPH. It carries out the reaction (6R)-5,10-methenyltetrahydrofolate + H2O = (6R)-10-formyltetrahydrofolate + H(+). It participates in one-carbon metabolism; tetrahydrofolate interconversion. Its function is as follows. Catalyzes the oxidation of 5,10-methylenetetrahydrofolate to 5,10-methenyltetrahydrofolate and then the hydrolysis of 5,10-methenyltetrahydrofolate to 10-formyltetrahydrofolate. In Pediococcus pentosaceus (strain ATCC 25745 / CCUG 21536 / LMG 10740 / 183-1w), this protein is Bifunctional protein FolD.